The chain runs to 793 residues: Splicing factor 3A subunit 1 (793 aa).

The disordered stretch occupies residues 1-42 (MPAGPVQAVPPPPPAATEPKQPTEEEASSKEDSTPSKPVVGI). Lys-20 is covalently cross-linked (Glycyl lysine isopeptide (Lys-Gly) (interchain with G-Cter in SUMO2)). Basic and acidic residues predominate over residues 21 to 34 (QPTEEEASSKEDST). One copy of the SURP motif 1 repeat lies at 52–94 (IVDKTASFVARNGPEFEARIRQNEINNPKFNFLNPNDPYHAYY). Residue Lys-55 is modified to N6-acetyllysine. Lys-131 is covalently cross-linked (Glycyl lysine isopeptide (Lys-Gly) (interchain with G-Cter in SUMO2)). The SURP motif 2 repeat unit spans residues 166–208 (VVKLTAQFVARNGRQFLTQLMQKEQRNYQFDFLRPQHSLFNYF). The disordered stretch occupies residues 318-412 (GESEEVEMEV…PAPAPDEYLV (95 aa)). Residues Ser-320, Ser-329, and Ser-359 each carry the phosphoserine modification. 2 stretches are compositionally biased toward acidic residues: residues 320–334 (SEEV…EEDE) and 354–364 (DMDEGSDDEEE). A compositionally biased stretch (pro residues) spans 368-384 (VPPPPETPMPPPLPPTP). Positions 388 to 397 (IVRKDYDPKA) are enriched in basic and acidic residues. Ser-413 carries the post-translational modification Phosphoserine. Lys-424 participates in a covalent cross-link: Glycyl lysine isopeptide (Lys-Gly) (interchain with G-Cter in SUMO2). Position 451 is a phosphoserine (Ser-451). Residue Tyr-456 is modified to Phosphotyrosine. Over residues 488-502 (IGEEEIQKPEEKVTW) the composition is skewed to basic and acidic residues. 3 disordered regions span residues 488-518 (IGEE…AAQA), 530-584 (HKAK…AMPP), and 666-685 (PMPP…SKKL). Lys-499 is covalently cross-linked (Glycyl lysine isopeptide (Lys-Gly) (interchain with G-Cter in SUMO2)). Phosphoserine is present on Ser-508. Over residues 509-518 (MARTQQAAQA) the composition is skewed to polar residues. A Glycyl lysine isopeptide (Lys-Gly) (interchain with G-Cter in SUMO2) cross-link involves residue Lys-542. Polar residues predominate over residues 563-572 (ATNIPSSAPP). Over residues 666–675 (PMPPVHPPPP) the composition is skewed to pro residues. A required and sufficient for nuclear import region spans residues 680-702 (PASKKLKTEDSLMPEEEFLRRNK). Residue Lys-686 forms a Glycyl lysine isopeptide (Lys-Gly) (interchain with G-Cter in SUMO2) linkage. The region spanning 707 to 793 (IKVQVPNMQD…ALKERGGRKK (87 aa)) is the Ubiquitin-like domain. At Tyr-759 the chain carries Phosphotyrosine.

In terms of assembly, component of the 17S U2 SnRNP complex, a ribonucleoprotein complex that contains small nuclear RNA (snRNA) U2 and a number of specific proteins. Part of the SF3A subcomplex of the 17S U2 SnRNP complex which is composed of three subunits; SF3A3/SAP61, SF3A2/SAP62 and SF3A1/SAP114. SF3A associates with the splicing factor SF3B and a 12S RNA unit to form the mature 17S U2 small nuclear ribonucleoprotein complex (17S U2 snRNP). SF3A1 functions as a scaffold that interacts directly with both SF3A2 and SF3A3. Identified in the spliceosome 'E' complex, a precursor of the spliceosome 'A' complex. Identified in the spliceosome 'A' and 'B' complexes. Identified in the spliceosome 'C' complex. Interacts with P2RX6; resulting in a reduction of the splicing activity.

The protein resides in the nucleus. It localises to the nucleus speckle. Its function is as follows. Component of the 17S U2 SnRNP complex of the spliceosome, a large ribonucleoprotein complex that removes introns from transcribed pre-mRNAs. The 17S U2 SnRNP complex (1) directly participates in early spliceosome assembly and (2) mediates recognition of the intron branch site during pre-mRNA splicing by promoting the selection of the pre-mRNA branch-site adenosine, the nucleophile for the first step of splicing. Within the 17S U2 SnRNP complex, SF3A1 is part of the SF3A subcomplex that contributes to the assembly of the 17S U2 snRNP, and the subsequent assembly of the pre-spliceosome 'E' complex and the pre-catalytic spliceosome 'A' complex. Involved in pre-mRNA splicing as a component of pre-catalytic spliceosome 'B' complexes. This is Splicing factor 3A subunit 1 (SF3A1) from Bos taurus (Bovine).